The primary structure comprises 314 residues: DNA-directed RNA polymerase subunit alpha (314 aa).

The interval 1-228 is alpha N-terminal domain (alpha-NTD); that stretch reads MIEFEKPNIH…DHLSIFVNLT (228 aa). The interval 245-314 is alpha C-terminal domain (alpha-CTD); that stretch reads KEKMLEMTIE…DLGLSLRKED (70 aa).

Belongs to the RNA polymerase alpha chain family. In terms of assembly, homodimer. The RNAP catalytic core consists of 2 alpha, 1 beta, 1 beta' and 1 omega subunit. When a sigma factor is associated with the core the holoenzyme is formed, which can initiate transcription.

The catalysed reaction is RNA(n) + a ribonucleoside 5'-triphosphate = RNA(n+1) + diphosphate. Its function is as follows. DNA-dependent RNA polymerase catalyzes the transcription of DNA into RNA using the four ribonucleoside triphosphates as substrates. The sequence is that of DNA-directed RNA polymerase subunit alpha from Lactiplantibacillus plantarum (strain ATCC BAA-793 / NCIMB 8826 / WCFS1) (Lactobacillus plantarum).